Reading from the N-terminus, the 256-residue chain is Galactitol 2-dehydrogenase (256 aa).

NAD(+) contacts are provided by residues Arg15–Ile17, Asp36, Asp59–Val60, Asn86, Tyr152, and Lys156. Tyr152 acts as the Proton acceptor in catalysis.

Belongs to the short-chain dehydrogenases/reductases (SDR) family.

The catalysed reaction is galactitol + NAD(+) = keto-D-tagatose + NADH + H(+). It catalyses the reaction keto-D-fructose + NADH + H(+) = D-sorbitol + NAD(+). The protein operates within carbohydrate metabolism. Involved in galactitol catabolism. Catalyzes the oxidation of galactitol to D-tagatose. Can also catalyze the oxidation of D-sorbitol to D-fructose. The chain is Galactitol 2-dehydrogenase from Agrobacterium fabrum (strain C58 / ATCC 33970) (Agrobacterium tumefaciens (strain C58)).